Reading from the N-terminus, the 267-residue chain is Orotidine 5'-phosphate decarboxylase (267 aa).

Lys-93 acts as the Proton donor in catalysis.

It belongs to the OMP decarboxylase family. Type 2 subfamily.

The catalysed reaction is orotidine 5'-phosphate + H(+) = UMP + CO2. It participates in pyrimidine metabolism; UMP biosynthesis via de novo pathway; UMP from orotate: step 2/2. The sequence is that of Orotidine 5'-phosphate decarboxylase from Herpetosiphon aurantiacus (strain ATCC 23779 / DSM 785 / 114-95).